The following is a 110-amino-acid chain: Cytochrome c6 (110 aa).

Residues 1–25 (MKKKLSVLFTVFSFFVIGFAQIAFA) form the signal peptide. Residues C39, C42, H43, and M83 each coordinate heme c.

This sequence belongs to the cytochrome c family. PetJ subfamily. In terms of assembly, monomer. Post-translationally, binds 1 heme c group covalently per subunit.

The protein resides in the plastid. It localises to the chloroplast thylakoid lumen. Functions as an electron carrier between membrane-bound cytochrome b6-f and photosystem I in oxygenic photosynthesis. The protein is Cytochrome c6 (petJ) of Pyropia yezoensis (Susabi-nori).